Reading from the N-terminus, the 508-residue chain is Adenosine deaminase (508 aa).

Positions 1-18 (MFSQLVVWLLATSTVCLA) are cleaved as a signal peptide.

The protein belongs to the metallo-dependent hydrolases superfamily. Adenosine and AMP deaminases family. ADGF subfamily. Zn(2+) serves as cofactor. In terms of tissue distribution, salivary gland (at protein level).

It is found in the secreted. It carries out the reaction adenosine + H2O + H(+) = inosine + NH4(+). Catalyzes the deamination of adenosine to inosine. The polypeptide is Adenosine deaminase (Lutzomyia longipalpis (Sand fly)).